Consider the following 502-residue polypeptide: MTEKKYIVALDQGTTSSRAVVMDHDANIISVSQREFEQIYPKPGWVEHDPMEIWATQSSTLVEVLAKADISSDQIAAIGITNQRETTIVWEKETGKPIYNAIVWQCRRTAEICEHLKRDGMEEYIRNNTGLVIDPYFSGTKVKWILDHVEGSRERARRGELLFGTVDTWLIWKMTQGRVHVTDYTNASRTMLFNIHTLDWDDKMLEVLDIPREMLPEVRRSSEVYGQTNIGGKGGTRIPISGIAGDQQAALFGQLCVKEGMAKNTYGTGCFMLMNTGEKAVKSENGLLTTIACGPTGEVNYALEGAVFMAGASIQWLRDEMKLINDAYDSEYFATKVQNTNGVYVVPAFTGLGAPYWDPYARGAIFGLTRGVNANHIIRATLESIAYQTRDVLEAMQADSGIRLHALRVDGGAVANNFLMQFQSDILGTRVERPEVREVTALGAAYLAGLAVGFWQNLDELQEKAVIEREFRPGIETTERNYRYAGWKKAVKRAMAWEEHDE.

Threonine 14 contributes to the ADP binding site. Threonine 14, threonine 15, and serine 16 together coordinate ATP. Position 14 (threonine 14) interacts with sn-glycerol 3-phosphate. Arginine 18 provides a ligand contact to ADP. Sn-glycerol 3-phosphate contacts are provided by arginine 84, glutamate 85, tyrosine 136, and aspartate 246. Positions 84, 85, 136, 246, and 247 each coordinate glycerol. Residues threonine 268 and glycine 311 each contribute to the ADP site. 4 residues coordinate ATP: threonine 268, glycine 311, glutamine 315, and glycine 412. The ADP site is built by glycine 412 and asparagine 416.

It belongs to the FGGY kinase family. Homotetramer and homodimer (in equilibrium). Heterodimer with EIIA-Glc. Binds 1 zinc ion per glycerol kinase EIIA-Glc dimer. The zinc ion is important for dimerization.

The catalysed reaction is glycerol + ATP = sn-glycerol 3-phosphate + ADP + H(+). Its pathway is polyol metabolism; glycerol degradation via glycerol kinase pathway; sn-glycerol 3-phosphate from glycerol: step 1/1. Activity of this regulatory enzyme is affected by several metabolites. Allosterically and non-competitively inhibited by fructose 1,6-bisphosphate (FBP) and unphosphorylated phosphocarrier protein EIIA-Glc (III-Glc), an integral component of the bacterial phosphotransferase (PTS) system. Key enzyme in the regulation of glycerol uptake and metabolism. Catalyzes the phosphorylation of glycerol to yield sn-glycerol 3-phosphate. This Escherichia coli O127:H6 (strain E2348/69 / EPEC) protein is Glycerol kinase.